Reading from the N-terminus, the 156-residue chain is MKIIEGKLALSGKEKIAIINARFNHIVTDRLVEGARDAFLRHGGDEANLSLILVPGAFEIPMALEKALASGKFDAVCCVGAVIRGSTPHFDYVSAETTKGIANVTLKYGKPVSFGVLTVDNIEQAIERAGSKAGNKGFEAMTGVIEMLNLYKNLGA.

5-amino-6-(D-ribitylamino)uracil contacts are provided by residues phenylalanine 23, 57–59 (AFE), and 81–83 (AVI). 86–87 (ST) is a binding site for (2S)-2-hydroxy-3-oxobutyl phosphate. The active-site Proton donor is histidine 89. Residue phenylalanine 114 participates in 5-amino-6-(D-ribitylamino)uracil binding. A (2S)-2-hydroxy-3-oxobutyl phosphate-binding site is contributed by arginine 128.

It belongs to the DMRL synthase family.

It carries out the reaction (2S)-2-hydroxy-3-oxobutyl phosphate + 5-amino-6-(D-ribitylamino)uracil = 6,7-dimethyl-8-(1-D-ribityl)lumazine + phosphate + 2 H2O + H(+). Its pathway is cofactor biosynthesis; riboflavin biosynthesis; riboflavin from 2-hydroxy-3-oxobutyl phosphate and 5-amino-6-(D-ribitylamino)uracil: step 1/2. Its function is as follows. Catalyzes the formation of 6,7-dimethyl-8-ribityllumazine by condensation of 5-amino-6-(D-ribitylamino)uracil with 3,4-dihydroxy-2-butanone 4-phosphate. This is the penultimate step in the biosynthesis of riboflavin. This Campylobacter curvus (strain 525.92) protein is 6,7-dimethyl-8-ribityllumazine synthase.